The chain runs to 1063 residues: Structural polyprotein (1063 aa).

Residues 1 to 131 are disordered; sequence MASTTPITME…LGPPTNPFQA (131 aa). Residues 30-69 form a human C1QBP/SF2P32-binding region; that stretch reads GASQSRRPRPPRQRDSSTTGDDSGRDSGGPRRRRGNRGRG. S46 carries the post-translational modification Phosphoserine; by host. The segment covering 59 to 69 has biased composition (basic residues); it reads PRRRRGNRGRG. Residues 70–87 are compositionally biased toward basic and acidic residues; sequence QRRDWSRAPPPPEERQET. Pro residues predominate over residues 93-107; sequence APKPSRAPPQQPQPP. C153 and C197 are oxidised to a cystine. The tract at residues 279 to 300 is functions as E2 signal peptide; that stretch reads GAPQAFLAGLLLAAVAVGTARA. Residues 301 to 534 are Extracellular-facing; the sequence is GLQPRADMAA…LWLATANALS (234 aa). N353, N371, N410, and N429 each carry an N-linked (GlcNAc...) asparagine; by host glycan. The helical transmembrane segment at 535–555 threads the bilayer; it reads LDHALAAFVLLVPWVLIFMVC. At 556 to 582 the chain is on the cytoplasmic side; sequence RRTCRRRGAAAALTAVVLQGYNPPAYG. The tract at residues 563 to 582 is functions as E1 signal peptide; the sequence is GAAAALTAVVLQGYNPPAYG. Residues 583–1028 are Extracellular-facing; the sequence is EEAFTYLCTA…QTWAEWAAAH (446 aa). 8 cysteine pairs are disulfide-bonded: C590/C595, C619/C824, C641/C653, C699/C712, C758/C767, C807/C817, C931/C934, and C950/C983. N-linked (GlcNAc...) asparagine; by host glycosylation is present at N658. Positions 670 and 671 each coordinate Ca(2+). The Ca(2+) site is built by D718 and T719. Residues N759 and N791 are each glycosylated (N-linked (GlcNAc...) asparagine; by host). Residues T1011 and T1012 are each glycosylated (O-linked (GalNAc...) threonine; by host). Residues 1029–1049 form a helical membrane-spanning segment; that stretch reads WWQLTLGAICALLLAGLLACC. The Extracellular segment spans residues 1050–1063; the sequence is AKCLYYLRGAIAPR.

In terms of assembly, homodimer; further assembles into homooligomer. Interacts with human C1QBP. Interacts (via N-terminus) with protease/methyltransferase p150. Heterodimer with spike glycoprotein E2. As to quaternary structure, heterodimer with spike glycoprotein E1. In terms of processing, structural polyprotein: Specific enzymatic cleavages in vivo yield mature proteins. Two signal peptidase-mediated cleavages within the polyprotein produce the structural proteins capsid, E2, and E1. The E2 signal peptide remains attached to the C-terminus of the capsid protein after cleavage by the signal peptidase. Another signal peptide at E2 C-terminus directs E1 to the ER, with a similar mechanism. Contains three N-linked oligosaccharides. Post-translationally, capsid is phosphorylated on Ser-46 by host. This phosphorylation negatively regulates capsid protein RNA-binding activity. Dephosphorylated by human PP1A.

It is found in the virion. The protein localises to the host cytoplasm. The protein resides in the host mitochondrion. Its subcellular location is the virion membrane. It localises to the host Golgi apparatus membrane. Its function is as follows. Capsid protein interacts with genomic RNA and assembles into icosahedric core particles 65-70 nm in diameter. The resulting nucleocapsid eventually associates with the cytoplasmic domain of E2 at the cell membrane, leading to budding and formation of mature virions from host Golgi membranes. Phosphorylation negatively regulates RNA-binding activity, possibly delaying virion assembly during the viral replication phase. Capsid protein dimerizes and becomes disulfide-linked in the virion. Modulates genomic RNA replication. Modulates subgenomic RNA synthesis by interacting with human C1QBP/SF2P32. Induces both perinuclear clustering of mitochondria and the formation of electron-dense intermitochondrial plaques, both hallmarks of rubella virus infected cells. Induces apoptosis when expressed in transfected cells. Functionally, responsible for viral attachment to target host cell, by binding to the cell receptor. Its transport to the plasma membrane depends on interaction with E1 protein. The surface glycoproteins display an irregular helical organization and a pseudo-tetrameric inner nucleocapsid arrangement. Class II viral fusion protein. Fusion activity is inactive as long as E1 is bound to E2 in mature virion. After virus attachment to target cell and clathrin-mediated endocytosis, acidification of the endosome would induce dissociation of E1/E2 heterodimer and concomitant trimerization of the E1 subunits. This E1 homotrimer is fusion active, and promotes release of viral nucleocapsid in cytoplasm after endosome and viral membrane fusion. The cytoplasmic tail of spike glycoprotein E1 modulates virus release. The surface glycoproteins display an irregular helical organization and a pseudo-tetrameric inner nucleocapsid arrangement. The sequence is that of Structural polyprotein from Homo sapiens (Human).